Reading from the N-terminus, the 636-residue chain is Eukaryotic peptide chain release factor GTP-binding subunit ERF3A (636 aa).

Gly residues-rich tracts occupy residues 1-16 and 103-116; these read MDPS…GGGS and AAGG…GAGG. 2 disordered regions span residues 1–54 and 90–206; these read MDPS…AAVA and LRGP…PPGA. Positions 121-138 are enriched in polar residues; the sequence is VESSQDQSCEGSNSTVSM. Positions 183–193 are enriched in acidic residues; it reads STQEMMEEEEE. The 227-residue stretch at 209–435 folds into the tr-type G domain; that stretch reads KEHVNVVFIG…DNLPNFNRSV (227 aa). Residues 218-225 are G1; sequence GHVDAGKS. GTP is bound at residue 221 to 226; that stretch reads DAGKST. The tract at residues 274 to 278 is G2; that stretch reads GKTVE. A G3 region spans residues 295 to 298; sequence DAPG. GTP is bound by residues 357 to 360 and 399 to 401; these read NKMD and SGL. The segment at 357 to 360 is G4; it reads NKMD. The segment at 399 to 401 is G5; sequence SGL.

Belongs to the TRAFAC class translation factor GTPase superfamily. Classic translation factor GTPase family. ERF3 subfamily. In terms of assembly, component of the eRF1-eRF3-GTP ternary complex, composed of ETF1/ERF1 and ERF3 (GSPT1/ERF3A or GSPT2/ERF3B) and GTP. Component of the transient SURF (SMG1-UPF1-eRF1-eRF3) complex. The ETF1-GSPT1 complex interacts with JMJD4. Interacts with PABPC1. Interacts with SHFL.

It carries out the reaction GTP + H2O = GDP + phosphate + H(+). GTPase component of the eRF1-eRF3-GTP ternary complex, a ternary complex that mediates translation termination in response to the termination codons UAA, UAG and UGA. GSPT1/ERF3A mediates ETF1/ERF1 delivery to stop codons: The eRF1-eRF3-GTP complex binds to a stop codon in the ribosomal A-site. GTP hydrolysis by GSPT1/ERF3A induces a conformational change that leads to its dissociation, permitting ETF1/ERF1 to accommodate fully in the A-site. Component of the transient SURF complex which recruits UPF1 to stalled ribosomes in the context of nonsense-mediated decay (NMD) of mRNAs containing premature stop codons. Required for SHFL-mediated translation termination which inhibits programmed ribosomal frameshifting (-1PRF) of mRNA from viruses and cellular genes. This Mus musculus (Mouse) protein is Eukaryotic peptide chain release factor GTP-binding subunit ERF3A (Gspt1).